The primary structure comprises 166 residues: Ribosome maturation factor RimM (166 aa).

Positions 91-163 (EDEFYEFQLI…KMQITPPEGW (73 aa)) constitute a PRC barrel domain.

The protein belongs to the RimM family. Binds ribosomal protein uS19.

The protein resides in the cytoplasm. An accessory protein needed during the final step in the assembly of 30S ribosomal subunit, possibly for assembly of the head region. Essential for efficient processing of 16S rRNA. May be needed both before and after RbfA during the maturation of 16S rRNA. It has affinity for free ribosomal 30S subunits but not for 70S ribosomes. The polypeptide is Ribosome maturation factor RimM (Sulfurihydrogenibium sp. (strain YO3AOP1)).